A 774-amino-acid chain; its full sequence is Ion-translocating oxidoreductase complex subunit C (774 aa).

2 4Fe-4S ferredoxin-type domains span residues 368–398 and 408–437; these read ELTS…QQLQ and KCEE…VQYY. Positions 378, 381, 384, 388, 417, 420, 423, and 427 each coordinate [4Fe-4S] cluster. Basic and acidic residues predominate over residues 459–490; the sequence is ARFEEKKARMERDKAERENRFKQAAEDRRKEM. 2 disordered regions span residues 459 to 496 and 533 to 774; these read ARFE…QGGS and AKQA…EEKD. Residues 533 to 545 show a composition bias toward low complexity; sequence AKQAEAAQSGASE. Positions 550 to 572 are enriched in basic and acidic residues; the sequence is EMAKLREERKRQARERKAQKGEV. Residues 605–618 are compositionally biased toward low complexity; the sequence is TESAAQPAQATPSS. Polar residues-rich tracts occupy residues 645–658, 686–698, 725–738, and 762–774; these read TEST…TPSS, ESAA…TPSS, TESA…TPSS, and QQSS…EEKD.

Belongs to the 4Fe4S bacterial-type ferredoxin family. RnfC subfamily. As to quaternary structure, the complex is composed of six subunits: RnfA, RnfB, RnfC, RnfD, RnfE and RnfG. [4Fe-4S] cluster is required as a cofactor.

The protein resides in the cell inner membrane. In terms of biological role, part of a membrane-bound complex that couples electron transfer with translocation of ions across the membrane. In Vibrio cholerae serotype O1 (strain ATCC 39315 / El Tor Inaba N16961), this protein is Ion-translocating oxidoreductase complex subunit C.